We begin with the raw amino-acid sequence, 117 residues long: MSHRDTGTHYENQARHYLERAGLVFKAANVTYQNGEIDLIMRDGDTWVFVEVRFRRNALFGGAAASVTYSKQQRLLRAATIWLAQRNACFATTPCRFDVFAITGSELEWLPNAFNAD.

Belongs to the UPF0102 family.

The sequence is that of UPF0102 protein YE3728 from Yersinia enterocolitica serotype O:8 / biotype 1B (strain NCTC 13174 / 8081).